Consider the following 591-residue polypeptide: L-fucose isomerase (591 aa).

Residues glutamate 337 and aspartate 361 each act as proton acceptor in the active site. Mn(2+)-binding residues include glutamate 337, aspartate 361, and histidine 528.

The protein belongs to the L-fucose isomerase family. In terms of assembly, homohexamer. It depends on Mn(2+) as a cofactor.

The protein resides in the cytoplasm. The catalysed reaction is L-fucose = L-fuculose. It functions in the pathway carbohydrate degradation; L-fucose degradation; L-lactaldehyde and glycerone phosphate from L-fucose: step 1/3. Its function is as follows. Converts the aldose L-fucose into the corresponding ketose L-fuculose. The protein is L-fucose isomerase of Klebsiella pneumoniae subsp. pneumoniae (strain ATCC 700721 / MGH 78578).